Consider the following 376-residue polypeptide: Glutamate 5-kinase (376 aa).

Lysine 15 is an ATP binding site. Positions 56, 143, and 155 each coordinate substrate. 175-176 (SD) lines the ATP pocket. In terms of domain architecture, PUA spans 281–358 (KGTLTIDAGA…PDVMMILGIS (78 aa)).

The protein belongs to the glutamate 5-kinase family.

Its subcellular location is the cytoplasm. It carries out the reaction L-glutamate + ATP = L-glutamyl 5-phosphate + ADP. Its pathway is amino-acid biosynthesis; L-proline biosynthesis; L-glutamate 5-semialdehyde from L-glutamate: step 1/2. Catalyzes the transfer of a phosphate group to glutamate to form L-glutamate 5-phosphate. In Rhodopseudomonas palustris (strain BisB5), this protein is Glutamate 5-kinase.